A 198-amino-acid chain; its full sequence is Photosystem I assembly protein Ycf4 (198 aa).

The next 2 membrane-spanning stretches (helical) occupy residues 35 to 57 (WFYN…SSYI) and 70 to 92 (IIFF…FSIN).

The protein belongs to the Ycf4 family.

It localises to the plastid. The protein resides in the chloroplast thylakoid membrane. In terms of biological role, seems to be required for the assembly of the photosystem I complex. The polypeptide is Photosystem I assembly protein Ycf4 (Euglena gracilis).